Here is a 150-residue protein sequence, read N- to C-terminus: FAD synthase (150 aa).

ATP is bound by residues 20–21, 25–28, and D103; these read TF and HPGH.

Belongs to the archaeal FAD synthase family. As to quaternary structure, homodimer. A divalent metal cation is required as a cofactor.

It carries out the reaction FMN + ATP + H(+) = FAD + diphosphate. Its pathway is cofactor biosynthesis; FAD biosynthesis; FAD from FMN: step 1/1. In terms of biological role, catalyzes the transfer of the AMP portion of ATP to flavin mononucleotide (FMN) to produce flavin adenine dinucleotide (FAD) coenzyme. The sequence is that of FAD synthase from Methanohalobium evestigatum (strain ATCC BAA-1072 / DSM 3721 / NBRC 107634 / OCM 161 / Z-7303).